The chain runs to 118 residues: Small ribosomal subunit protein uS13 (118 aa).

A disordered region spans residues 91–118 (HRRGLPVRGQRTKTNARTRKGPRKPIKK).

This sequence belongs to the universal ribosomal protein uS13 family. As to quaternary structure, part of the 30S ribosomal subunit. Forms a loose heterodimer with protein S19. Forms two bridges to the 50S subunit in the 70S ribosome.

In terms of biological role, located at the top of the head of the 30S subunit, it contacts several helices of the 16S rRNA. In the 70S ribosome it contacts the 23S rRNA (bridge B1a) and protein L5 of the 50S subunit (bridge B1b), connecting the 2 subunits; these bridges are implicated in subunit movement. Contacts the tRNAs in the A and P-sites. This is Small ribosomal subunit protein uS13 from Sodalis glossinidius (strain morsitans).